The chain runs to 610 residues: UvrABC system protein C (610 aa).

The GIY-YIG domain occupies 16-94; the sequence is SQPGVYRMYD…IKLYQPRYNV (79 aa). Residues 204–239 enclose the UVR domain; sequence DQVLTQLIARMEKASQDLAFEEAARIRDQIQAVRRV.

It belongs to the UvrC family. Interacts with UvrB in an incision complex.

Its subcellular location is the cytoplasm. Its function is as follows. The UvrABC repair system catalyzes the recognition and processing of DNA lesions. UvrC both incises the 5' and 3' sides of the lesion. The N-terminal half is responsible for the 3' incision and the C-terminal half is responsible for the 5' incision. This chain is UvrABC system protein C, found in Salmonella agona (strain SL483).